A 233-amino-acid polypeptide reads, in one-letter code: Protein Mis18-alpha (233 aa).

A phosphoserine mark is found at Ser36, Ser39, and Ser40. In terms of domain architecture, Mis18 spans 80–178 (PLVFLCSGCR…SVEAIESYVL (99 aa)). Zn(2+) is bound by residues Cys85, Cys88, Cys141, and Cys144. A Glycyl lysine isopeptide (Lys-Gly) (interchain with G-Cter in SUMO2) cross-link involves residue Lys162. Ser233 is subject to Phosphoserine.

This sequence belongs to the mis18 family. Homodimer, and heterodimer with OIP5/MIS18B. Identified in a complex containing MIS18A, OIP5/MIS18B, MIS18BP1, RBBP7 and RBBP4. In terms of tissue distribution, detected in testis.

It is found in the nucleus. The protein resides in the chromosome. The protein localises to the centromere. Its function is as follows. Required for recruitment of CENPA to centromeres and normal chromosome segregation during mitosis. The chain is Protein Mis18-alpha (MIS18A) from Homo sapiens (Human).